The chain runs to 564 residues: Interactor of constitutive active ROPs 3 (564 aa).

2 disordered regions span residues 1-73 and 88-135; these read MQTQ…SRIT and KAKD…SALE. The span at 33 to 44 shows a compositional bias: polar residues; that stretch reads ESSSSPISATNR. 2 stretches are compositionally biased toward basic and acidic residues: residues 63–73 and 98–123; these read VSEKKRPSRIT and TSKKQAEQEAEESRKQLQEVSSKLEE. Coiled coils occupy residues 70–133 and 231–514; these read SRIT…ETSA and AETE…AATA. Residue serine 533 is modified to Phosphoserine.

The protein belongs to the ICR family. As to quaternary structure, interacts with ARAC11 in vitro. Expressed in flowers.

Acts as a scaffold, mediating interaction of ROPs with different proteins. This Arabidopsis thaliana (Mouse-ear cress) protein is Interactor of constitutive active ROPs 3 (ICR3).